Here is a 503-residue protein sequence, read N- to C-terminus: Maturase K (503 aa).

It belongs to the intron maturase 2 family. MatK subfamily.

Its subcellular location is the plastid. It is found in the chloroplast. In terms of biological role, usually encoded in the trnK tRNA gene intron. Probably assists in splicing its own and other chloroplast group II introns. This Vicia sativa (Spring vetch) protein is Maturase K.